A 126-amino-acid chain; its full sequence is Fluoride-specific ion channel FluC (126 aa).

A run of 4 helical transmembrane segments spans residues Leu9–Leu29, Leu35–Ile55, Leu63–Leu83, and Trp94–Leu114. Residues Gly73 and Ser76 each contribute to the Na(+) site.

The protein belongs to the fluoride channel Fluc/FEX (TC 1.A.43) family.

Its subcellular location is the cell inner membrane. It catalyses the reaction fluoride(in) = fluoride(out). With respect to regulation, na(+) is not transported, but it plays an essential structural role and its presence is essential for fluoride channel function. Functionally, fluoride-specific ion channel. Important for reducing fluoride concentration in the cell, thus reducing its toxicity. This chain is Fluoride-specific ion channel FluC, found in Ruegeria pomeroyi (strain ATCC 700808 / DSM 15171 / DSS-3) (Silicibacter pomeroyi).